A 243-amino-acid polypeptide reads, in one-letter code: Pyridoxine 5'-phosphate synthase (243 aa).

Asparagine 9 contributes to the 3-amino-2-oxopropyl phosphate binding site. 11 to 12 (DH) lines the 1-deoxy-D-xylulose 5-phosphate pocket. Arginine 20 contributes to the 3-amino-2-oxopropyl phosphate binding site. The active-site Proton acceptor is the histidine 45. 1-deoxy-D-xylulose 5-phosphate-binding residues include arginine 47 and histidine 52. The active-site Proton acceptor is glutamate 72. Position 102 (threonine 102) interacts with 1-deoxy-D-xylulose 5-phosphate. Residue histidine 193 is the Proton donor of the active site. Residues glycine 194 and 215–216 (GH) each bind 3-amino-2-oxopropyl phosphate.

This sequence belongs to the PNP synthase family. In terms of assembly, homooctamer; tetramer of dimers.

The protein localises to the cytoplasm. The catalysed reaction is 3-amino-2-oxopropyl phosphate + 1-deoxy-D-xylulose 5-phosphate = pyridoxine 5'-phosphate + phosphate + 2 H2O + H(+). Its pathway is cofactor biosynthesis; pyridoxine 5'-phosphate biosynthesis; pyridoxine 5'-phosphate from D-erythrose 4-phosphate: step 5/5. In terms of biological role, catalyzes the complicated ring closure reaction between the two acyclic compounds 1-deoxy-D-xylulose-5-phosphate (DXP) and 3-amino-2-oxopropyl phosphate (1-amino-acetone-3-phosphate or AAP) to form pyridoxine 5'-phosphate (PNP) and inorganic phosphate. This is Pyridoxine 5'-phosphate synthase from Vibrio cholerae serotype O1 (strain ATCC 39315 / El Tor Inaba N16961).